Here is a 295-residue protein sequence, read N- to C-terminus: Pyridoxal 5'-phosphate synthase subunit PdxS (295 aa).

Asp-25 is a binding site for D-ribose 5-phosphate. Lys-82 serves as the catalytic Schiff-base intermediate with D-ribose 5-phosphate. Gly-154 contributes to the D-ribose 5-phosphate binding site. Position 166 (Arg-166) interacts with D-glyceraldehyde 3-phosphate. Residues Gly-215 and 236 to 237 (GS) contribute to the D-ribose 5-phosphate site.

This sequence belongs to the PdxS/SNZ family. In terms of assembly, in the presence of PdxT, forms a dodecamer of heterodimers.

The enzyme catalyses aldehydo-D-ribose 5-phosphate + D-glyceraldehyde 3-phosphate + L-glutamine = pyridoxal 5'-phosphate + L-glutamate + phosphate + 3 H2O + H(+). It functions in the pathway cofactor biosynthesis; pyridoxal 5'-phosphate biosynthesis. Functionally, catalyzes the formation of pyridoxal 5'-phosphate from ribose 5-phosphate (RBP), glyceraldehyde 3-phosphate (G3P) and ammonia. The ammonia is provided by the PdxT subunit. Can also use ribulose 5-phosphate and dihydroxyacetone phosphate as substrates, resulting from enzyme-catalyzed isomerization of RBP and G3P, respectively. The sequence is that of Pyridoxal 5'-phosphate synthase subunit PdxS from Oceanobacillus iheyensis (strain DSM 14371 / CIP 107618 / JCM 11309 / KCTC 3954 / HTE831).